Reading from the N-terminus, the 385-residue chain is NADH-quinone oxidoreductase subunit H (385 aa).

A run of 8 helical transmembrane segments spans residues 14 to 34 (GLKL…LVWL), 80 to 100 (FLYY…FSAI), 130 to 150 (IGVG…TLLM), 172 to 192 (ISYE…YGTF), 219 to 239 (LPNW…SAAF), 280 to 300 (MMIA…IPYV), 325 to 345 (LIHF…FIWV), and 365 to 385 (MLPW…IASL).

The protein belongs to the complex I subunit 1 family. NDH-1 is composed of 14 different subunits. Subunits NuoA, H, J, K, L, M, N constitute the membrane sector of the complex.

It localises to the cell inner membrane. The enzyme catalyses a quinone + NADH + 5 H(+)(in) = a quinol + NAD(+) + 4 H(+)(out). In terms of biological role, NDH-1 shuttles electrons from NADH, via FMN and iron-sulfur (Fe-S) centers, to quinones in the respiratory chain. The immediate electron acceptor for the enzyme in this species is believed to be ubiquinone. Couples the redox reaction to proton translocation (for every two electrons transferred, four hydrogen ions are translocated across the cytoplasmic membrane), and thus conserves the redox energy in a proton gradient. This subunit may bind ubiquinone. The sequence is that of NADH-quinone oxidoreductase subunit H from Bdellovibrio bacteriovorus (strain ATCC 15356 / DSM 50701 / NCIMB 9529 / HD100).